Here is a 362-residue protein sequence, read N- to C-terminus: UV excision repair protein RAD23 homolog A (362 aa).

In terms of domain architecture, Ubiquitin-like spans 1 to 81; the sequence is MAVTITLKTL…VVVMVTKAKT (81 aa). Disordered regions lie at residues 80 to 160 and 201 to 227; these read KTSP…LVTG and GIPG…TEAG. Low complexity predominate over residues 88–109; sequence PSEASPTATPESSTSFPSAPAS. Residue Lys122 forms a Glycyl lysine isopeptide (Lys-Gly) (interchain with G-Cter in ubiquitin) linkage. Residues Ser123, Ser128, Ser133, Ser136, and Ser138 each carry the phosphoserine modification. The segment covering 126 to 144 has biased composition (low complexity); sequence EESAPTTSPESVSGSVPSS. Positions 161–201 constitute a UBA 1 domain; sequence SEYETMLTEIMSMGYERERVVAALRASYNNPHRAVEYLLTG. 3 positions are modified to phosphoserine: Ser205, Ser294, and Ser356. A UBA 2 domain is found at 317 to 357; that stretch reads PQEKEAIERLKALGFPESLVIQAYFACEKNENLAANFLLSQ.

Belongs to the RAD23 family. As to quaternary structure, interacts with XPC; the interaction is suggesting the existence of a functional equivalent variant XPC complex. Interacts with PSMD4 and PSMC5. Interacts with ATXN3. Interacts with UBQLN2.

It localises to the nucleus. Functionally, multiubiquitin chain receptor involved in modulation of proteasomal degradation. Binds to 'Lys-48'-linked polyubiquitin chains in a length-dependent manner and with a lower affinity to 'Lys-63'-linked polyubiquitin chains. Proposed to be capable to bind simultaneously to the 26S proteasome and to polyubiquitinated substrates and to deliver ubiquitinated proteins to the proteasome. In terms of biological role, involved in nucleotide excision repair and is thought to be functional equivalent for RAD23B in global genome nucleotide excision repair (GG-NER) by association with XPC. In vitro, XPC:RAD23A dimer has NER activity. Can stabilize XPC. This chain is UV excision repair protein RAD23 homolog A (RAD23A), found in Bos taurus (Bovine).